Here is a 349-residue protein sequence, read N- to C-terminus: tRNA pseudouridine synthase D (349 aa).

Phenylalanine 27 is a substrate binding site. Aspartate 80 serves as the catalytic Nucleophile. Asparagine 129 provides a ligand contact to substrate. Positions 155 to 303 (GVPNYFGAQR…VEAARRAMLL (149 aa)) constitute a TRUD domain. Residue phenylalanine 329 participates in substrate binding.

Belongs to the pseudouridine synthase TruD family.

The catalysed reaction is uridine(13) in tRNA = pseudouridine(13) in tRNA. In terms of biological role, responsible for synthesis of pseudouridine from uracil-13 in transfer RNAs. In Escherichia coli O9:H4 (strain HS), this protein is tRNA pseudouridine synthase D.